Reading from the N-terminus, the 147-residue chain is Lysozyme C (147 aa).

The N-terminal stretch at 1 to 18 (MKALVILGFLFLSVAVQG) is a signal peptide. One can recognise a C-type lysozyme domain in the interval 19 to 147 (KVFERCELAR…VSSYVEGCTL (129 aa)). Cystine bridges form between Cys-24–Cys-145, Cys-48–Cys-133, Cys-83–Cys-99, and Cys-95–Cys-113. Active-site residues include Glu-53 and Asp-71.

Belongs to the glycosyl hydrolase 22 family. In terms of assembly, monomer. In terms of tissue distribution, stomach-specific.

The catalysed reaction is Hydrolysis of (1-&gt;4)-beta-linkages between N-acetylmuramic acid and N-acetyl-D-glucosamine residues in a peptidoglycan and between N-acetyl-D-glucosamine residues in chitodextrins.. In terms of biological role, lysozymes have primarily a bacteriolytic function; those in tissues and body fluids are associated with the monocyte-macrophage system and enhance the activity of immunoagents. In Bos taurus (Bovine), this protein is Lysozyme C (LYZ1).